Here is a 459-residue protein sequence, read N- to C-terminus: MSAGWFRRRFLPGEPLPAPRPPGPHASPVPYRRPRFLRGSSSSPGAADASRRPDSRPVRSPARGRTLPWNAGYAEIINAEKSEFNEDQAACGKLCIRRCEFGAEEEWLTLCPEEFLTGHYWALFDGHGGPAAAILAANTLHSCLRRQLEAVVEGLVATQPPMHLNGRCICPSDPQFVEEKGIRAEDLVIGALESAFQECDEVIGRELEASGQMGGCTALVAVSLQGKLYMANAGDSRAILVRRDEIRPLSFEFTPETERQRIQQLAFVYPELLAGEFTRLEFPRRLKGDDLGQKVLFRDHHMSGWSYKRVEKSDLKYPLIHGQGRQARLLGTLAVSRGLGDHQLRVLDTNIQLKPFLLSVPQVTVLDVDQLELQEDDVVVMATDGLWDVLSNEQVAWLVRSFLPGNQEDPHRFSKLAQMLIHSTQGKEDSLTEEGQVSYDDVSVFVIPLHSQGQESSDH.

Residues 1 to 10 (MSAGWFRRRF) show a composition bias toward basic residues. Positions 1–64 (MSAGWFRRRF…SRPVRSPARG (64 aa)) are disordered. Over residues 14 to 27 (EPLPAPRPPGPHAS) the composition is skewed to pro residues. The span at 38–48 (RGSSSSPGAAD) shows a compositional bias: low complexity. Aspartate 125 and glycine 126 together coordinate Mn(2+). The PPM-type phosphatase domain occupies 162 to 459 (MHLNGRCICP…HSQGQESSDH (298 aa)).

This sequence belongs to the PP2C family. Mg(2+) serves as cofactor. Requires Mn(2+) as cofactor.

The protein resides in the nucleus. It carries out the reaction O-phospho-L-seryl-[protein] + H2O = L-seryl-[protein] + phosphate. The catalysed reaction is O-phospho-L-threonyl-[protein] + H2O = L-threonyl-[protein] + phosphate. In Homo sapiens (Human), this protein is Protein phosphatase 1M (PPM1M).